The chain runs to 264 residues: 4-hydroxy-tetrahydrodipicolinate reductase (264 aa).

10 to 15 (GCLGRQ) contributes to the NAD(+) binding site. Arg-37 contributes to the NADP(+) binding site. NAD(+)-binding positions include 99 to 101 (GTT) and 121 to 124 (SANL). Catalysis depends on His-153, which acts as the Proton donor/acceptor. Residue His-154 coordinates (S)-2,3,4,5-tetrahydrodipicolinate. Lys-157 serves as the catalytic Proton donor. Residue 163 to 164 (GT) coordinates (S)-2,3,4,5-tetrahydrodipicolinate.

This sequence belongs to the DapB family.

It localises to the cytoplasm. It carries out the reaction (S)-2,3,4,5-tetrahydrodipicolinate + NAD(+) + H2O = (2S,4S)-4-hydroxy-2,3,4,5-tetrahydrodipicolinate + NADH + H(+). The enzyme catalyses (S)-2,3,4,5-tetrahydrodipicolinate + NADP(+) + H2O = (2S,4S)-4-hydroxy-2,3,4,5-tetrahydrodipicolinate + NADPH + H(+). It functions in the pathway amino-acid biosynthesis; L-lysine biosynthesis via DAP pathway; (S)-tetrahydrodipicolinate from L-aspartate: step 4/4. Its function is as follows. Catalyzes the conversion of 4-hydroxy-tetrahydrodipicolinate (HTPA) to tetrahydrodipicolinate. In Ehrlichia ruminantium (strain Gardel), this protein is 4-hydroxy-tetrahydrodipicolinate reductase.